The sequence spans 446 residues: Anthranilate N-benzoyltransferase protein 2 (446 aa).

Catalysis depends on proton acceptor residues His-164 and Asp-393.

Belongs to the plant acyltransferase family. In terms of processing, N-terminus is blocked.

The enzyme catalyses anthranilate + benzoyl-CoA = N-benzoylanthranilate + CoA. The protein operates within phytoalexin biosynthesis; methoxydianthramide B biosynthesis. Functionally, catalyzes the formation of N-benzoylanthranilate, in the course of methoxydianthramide B, a phytoalexin. Phytoalexins are produced in response to infection by parasites, and are essential for the expression of disease resistance. This is Anthranilate N-benzoyltransferase protein 2 (HCBT2) from Dianthus caryophyllus (Carnation).